Here is a 205-residue protein sequence, read N- to C-terminus: Iron-sulfur assembly protein 2 (205 aa).

Residues C131, C196, and C198 each coordinate Fe cation.

This sequence belongs to the HesB/IscA family.

It localises to the mitochondrion matrix. In terms of biological role, involved in the assembly of mitochondrial and cytoplasmic iron-sulfur proteins. Probably involved in the binding of an intermediate of Fe/S cluster assembly. This chain is Iron-sulfur assembly protein 2 (isa2), found in Schizosaccharomyces pombe (strain 972 / ATCC 24843) (Fission yeast).